Here is a 271-residue protein sequence, read N- to C-terminus: Tryptophan synthase alpha chain (271 aa).

Catalysis depends on proton acceptor residues Glu-49 and Asp-60.

This sequence belongs to the TrpA family. Tetramer of two alpha and two beta chains.

The enzyme catalyses (1S,2R)-1-C-(indol-3-yl)glycerol 3-phosphate + L-serine = D-glyceraldehyde 3-phosphate + L-tryptophan + H2O. The protein operates within amino-acid biosynthesis; L-tryptophan biosynthesis; L-tryptophan from chorismate: step 5/5. Functionally, the alpha subunit is responsible for the aldol cleavage of indoleglycerol phosphate to indole and glyceraldehyde 3-phosphate. The chain is Tryptophan synthase alpha chain from Azoarcus sp. (strain BH72).